We begin with the raw amino-acid sequence, 98 residues long: NADH-ubiquinone oxidoreductase chain 4L (98 aa).

Transmembrane regions (helical) follow at residues 1 to 21 (MSLV…GLLM), 29 to 49 (SLLC…LTIL), and 61 to 81 (IILL…LVMV).

This sequence belongs to the complex I subunit 4L family. As to quaternary structure, core subunit of respiratory chain NADH dehydrogenase (Complex I) which is composed of 45 different subunits.

Its subcellular location is the mitochondrion inner membrane. It catalyses the reaction a ubiquinone + NADH + 5 H(+)(in) = a ubiquinol + NAD(+) + 4 H(+)(out). Functionally, core subunit of the mitochondrial membrane respiratory chain NADH dehydrogenase (Complex I) which catalyzes electron transfer from NADH through the respiratory chain, using ubiquinone as an electron acceptor. Part of the enzyme membrane arm which is embedded in the lipid bilayer and involved in proton translocation. In Muntiacus feae (Fea's muntjac), this protein is NADH-ubiquinone oxidoreductase chain 4L (MT-ND4L).